The chain runs to 381 residues: MTTMSDLSPDLVGEILTRVPMTSLISVRCTCKMWNALSKEGIFFKAARKQFMGFTMMDSRVCSMKFDLQGIRNNEHDFVDPCIKQIAKLDQIEVSKVLQCDGLLLCVGKDNSRLLVWNPYLGQTRFIKPRKRFNKLEWYALGYDNNHNYKILMNYDTGHLFGYEIYDFSSDSWRVLDVSPDCHIPFHQQSVSLNGNTYFLAQEKIIVEGEEEEVVDEIEKFLLCFDFTTERFGPRLPLPFHSDVLETVAISCVRDDQLAVLYQRFETWEIWVTTKIDPTAVSWSMFLSVDMEPPTGCQFDDEAGSFFIDEENKVAVFFNSDLFNPRVENRNRRYPTAYIIGQDGYFKSATLREAPDLVKPDPYVYCCPLVWSSYAPSLVQL.

The region spanning 1–47 (MTTMSDLSPDLVGEILTRVPMTSLISVRCTCKMWNALSKEGIFFKAA) is the F-box domain.

In Arabidopsis thaliana (Mouse-ear cress), this protein is Putative F-box protein At4g17200.